The primary structure comprises 549 residues: Cation/acetate symporter ActP (549 aa).

13 helical membrane passes run 33-53 (WQAIIMFLIFVLLTLYITYWA), 76-96 (GLAIAGDFMSAASFLGISALV), 103-123 (GLIYSLGFLVGWPIILFLIAE), 149-169 (LSACGSLVVVALYLIAQMVGA), 183-203 (IAVVLVGVLMVMYVLFGGMLA), 206-226 (WVQIIKAVLLLFGASFMAFMV), 262-282 (ISALSLGLGLMFGTAGLPHIL), 303-323 (GFMGYFYILTFIIGFGAIMLV), 355-375 (LFLGFISAVAFATILAVVAGL), 404-424 (VSKITVLILGVVAILLGILFE), 428-448 (IAFMVGLAFSIAASCNFPIIL), 463-483 (IGGWLGLLTAVILMVLGPTIW), and 493-513 (IFPYEYPALFSIAVAFIGIWF).

This sequence belongs to the sodium:solute symporter (SSF) (TC 2.A.21) family.

The protein localises to the cell inner membrane. Its function is as follows. Transports acetate. This is Cation/acetate symporter ActP from Enterobacter sp. (strain 638).